Here is a 61-residue protein sequence, read N- to C-terminus: Insect toxin BsIT1 (61 aa).

An LCN-type CS-alpha/beta domain is found at 1–61 (DGYILMRNGC…KHLNYHKKTC (61 aa)). 4 disulfides stabilise this stretch: C10-C61, C14-C35, C21-C42, and C25-C44.

It belongs to the long (4 C-C) scorpion toxin superfamily. Sodium channel inhibitor family. Beta subfamily. In terms of tissue distribution, expressed by the venom gland.

Its subcellular location is the secreted. Depressant insect beta-toxins cause a transient contraction paralysis followed by a slow flaccid paralysis. They bind voltage-independently at site-4 of sodium channels (Nav) and shift the voltage of activation toward more negative potentials thereby affecting sodium channel activation and promoting spontaneous and repetitive firing. This toxin is active only on insects and causes a transient contraction paralysis followed by a slow flaccid paralysis. This Hottentotta tamulus sindicus (Scorpion) protein is Insect toxin BsIT1.